We begin with the raw amino-acid sequence, 657 residues long: Serine/threonine kinase NLK (657 aa).

The 347-residue stretch at 208-554 folds into the Protein kinase domain; it reads SQPDRPIGYG…VEEALSHPYL (347 aa). ATP-binding positions include 214–222 and Lys237; that span reads IGYGAFGVV. The active-site Proton acceptor is the Asp391.

This sequence belongs to the protein kinase superfamily. Ser/Thr protein kinase family. As to quaternary structure, component of the beta-catenin-lit-1 complex (also called the lit-1/wrm-1 complex or the wrm-1/lit-1 kinase complex) at least composed of lit-1 and wrm-1. Interacts with wrm-1 (via N-terminus); the interaction is direct and activates lit-1 kinase activity which leads to the phosphorylation of pop-1. This promotes pop-1 interaction with par-5 and translocation of pop-1 from the nucleus to the cytoplasm. Interacts with pop-1 (when phosphorylated on 'Ser-125'); the interaction is dependent on the beta-catenin-lit-1 complex. The cofactor is Mg(2+).

The protein resides in the cytoplasm. It is found in the cell cortex. The protein localises to the nucleus. The enzyme catalyses L-seryl-[protein] + ATP = O-phospho-L-seryl-[protein] + ADP + H(+). It catalyses the reaction L-threonyl-[protein] + ATP = O-phospho-L-threonyl-[protein] + ADP + H(+). Has a role in the Wnt signaling pathway controlling the asymmetry of cell divisions during embryogenesis. Operates in the AB and EMS cell lineages influencing cell specification. Required for body wall muscle development, endoderm development, pop-1 asymmetry and T-cell division asymmetry. Component of the beta-catenin-lit-1 complex which promotes the phosphorylation, down-regulation and subcellular relocation of pop-1. Regulates plp-1 nuclear localization in embryos. Plays a role in male tail tip morphogenesis. The sequence is that of Serine/threonine kinase NLK from Caenorhabditis briggsae.